Here is a 130-residue protein sequence, read N- to C-terminus: Glycine cleavage system H protein (130 aa).

Residues 24 to 106 enclose the Lipoyl-binding domain; it reads GIKVGISAFA…YQEGWLLKIT (83 aa). Lys-65 is subject to N6-lipoyllysine.

This sequence belongs to the GcvH family. The glycine cleavage system is composed of four proteins: P, T, L and H. (R)-lipoate serves as cofactor.

Its function is as follows. The glycine cleavage system catalyzes the degradation of glycine. The H protein shuttles the methylamine group of glycine from the P protein to the T protein. In Synechococcus sp. (strain RCC307), this protein is Glycine cleavage system H protein.